The following is a 401-amino-acid chain: cAMP-dependent protein kinase type II-alpha regulatory subunit (401 aa).

The residue at position 2 (Ser2) is an N-acetylserine. The dimerization and phosphorylation stretch occupies residues 2-135 (SHIQIPPGLT…RLQEACKDIL (134 aa)). Ser47, Ser74, Ser76, and Ser96 each carry phosphoserine. Residues 61–83 (ESSAVPVIEEDGESDSDSEDADL) are disordered. Over residues 68-83 (IEEDGESDSDSEDADL) the composition is skewed to acidic residues. Residues 136 to 257 (LFKN…ESVP), Glu205, Arg214, 258 to 401 (LFKS…DPGQ), Glu335, and Arg344 contribute to the 3',5'-cyclic AMP site. Thr212 bears the Phosphothreonine; by PDPK1 mark. Phosphoserine occurs at positions 347 and 392.

The protein belongs to the cAMP-dependent kinase regulatory chain family. In terms of assembly, the inactive form of the enzyme is composed of two regulatory chains and two catalytic chains. Activation by cAMP produces two active catalytic monomers and a regulatory dimer that binds four cAMP molecules. Interacts with AKAP4. Interacts with CBFA2T3. Interacts with the phosphorylated form of PJA2. Interacts with MYRIP. This interaction may link PKA to components of the exocytosis machinery, thus facilitating exocytosis, including insulin release. Forms a complex composed of PRKAR2A, GSK3B and GSKIP through GSKIP interaction; facilitates PKA-induced phosphorylation and regulates GSK3B activity. Interacts with ADCY8; inhibits adenylate cyclase activity through PKA phosphorylation. Phosphorylated by the activated catalytic chain. In terms of tissue distribution, four types of regulatory chains are found: I-alpha, I-beta, II-alpha, and II-beta. Their expression varies among tissues and is in some cases constitutive and in others inducible.

It is found in the cytoplasm. It localises to the cell membrane. Regulatory subunit of the cAMP-dependent protein kinases involved in cAMP signaling in cells. Type II regulatory chains mediate membrane association by binding to anchoring proteins, including the MAP2 kinase. This is cAMP-dependent protein kinase type II-alpha regulatory subunit (Prkar2a) from Mus musculus (Mouse).